Here is a 652-residue protein sequence, read N- to C-terminus: p-hydroxybenzoic acid efflux pump subunit AaeB (652 aa).

Helical transmembrane passes span 8–28 (FPIK…HFNL), 34–54 (AVMT…GDPF), 64–84 (LRII…IATI), 88–108 (ALMM…SSLI), 118–138 (LAGY…SVLL), 149–169 (EIII…PRSV), 367–387 (LFWL…LAVI), 404–424 (FLYG…VIMP), 429–449 (SMLL…ILIQ), 453–473 (IGTL…NPMT), and 480–500 (LDNA…ILLI).

This sequence belongs to the aromatic acid exporter ArAE (TC 2.A.85) family.

It is found in the cell inner membrane. Functionally, forms an efflux pump with AaeA. Could function as a metabolic relief valve, allowing to eliminate certain compounds when they accumulate to high levels in the cell. This chain is p-hydroxybenzoic acid efflux pump subunit AaeB, found in Erwinia billingiae (strain Eb661).